The primary structure comprises 734 residues: Photosystem I P700 chlorophyll a apoprotein A2 (734 aa).

8 helical membrane-spanning segments follow: residues 46–69 (IFAS…FHVA), 135–158 (LYTG…LHLQ), 175–199 (LNHH…HVAI), 273–291 (MAHH…GHMY), 330–353 (LHFQ…QHMY), 369–395 (SALY…IFFI), 417–439 (ALIS…LYVH), and 517–535 (FLVH…LILV). [4Fe-4S] cluster-binding residues include Cys-559 and Cys-568. The next 2 helical transmembrane spans lie at 575 to 596 (AFYL…YWHW) and 643 to 665 (LSVW…MFLI). Chlorophyll a contacts are provided by His-654, Met-662, and Tyr-670. Trp-671 provides a ligand contact to phylloquinone. The chain crosses the membrane as a helical span at residues 707-727 (LVGLAHFSVGYVFTYAAFVIA).

Belongs to the PsaA/PsaB family. The PsaA/B heterodimer binds the P700 chlorophyll special pair and subsequent electron acceptors. PSI consists of a core antenna complex that captures photons, and an electron transfer chain that converts photonic excitation into a charge separation. The eukaryotic PSI reaction center is composed of at least 11 subunits. Requires P700 is a chlorophyll a/chlorophyll a' dimer, A0 is one or more chlorophyll a, A1 is one or both phylloquinones and FX is a shared 4Fe-4S iron-sulfur center. as cofactor.

It is found in the plastid. Its subcellular location is the chloroplast thylakoid membrane. The catalysed reaction is reduced [plastocyanin] + hnu + oxidized [2Fe-2S]-[ferredoxin] = oxidized [plastocyanin] + reduced [2Fe-2S]-[ferredoxin]. Its function is as follows. PsaA and PsaB bind P700, the primary electron donor of photosystem I (PSI), as well as the electron acceptors A0, A1 and FX. PSI is a plastocyanin/cytochrome c6-ferredoxin oxidoreductase, converting photonic excitation into a charge separation, which transfers an electron from the donor P700 chlorophyll pair to the spectroscopically characterized acceptors A0, A1, FX, FA and FB in turn. Oxidized P700 is reduced on the lumenal side of the thylakoid membrane by plastocyanin or cytochrome c6. This Nephroselmis olivacea (Green alga) protein is Photosystem I P700 chlorophyll a apoprotein A2.